Here is a 373-residue protein sequence, read N- to C-terminus: Cystathionine gamma-synthase/O-acetylhomoserine (thiol)-lyase (373 aa).

Lys197 carries the N6-(pyridoxal phosphate)lysine modification.

It belongs to the trans-sulfuration enzymes family. As to quaternary structure, homotetramer. Pyridoxal 5'-phosphate serves as cofactor.

It localises to the cytoplasm. The catalysed reaction is O-acetyl-L-homoserine + L-cysteine = L,L-cystathionine + acetate + H(+). The enzyme catalyses O-acetyl-L-homoserine + hydrogen sulfide = L-homocysteine + acetate. The protein operates within amino-acid biosynthesis; L-methionine biosynthesis via de novo pathway. In terms of biological role, catalyzes the formation of L-cystathionine from O-acetyl-L-homoserine and L-cysteine. Cannot use O-succinyl-L-homoserine as substrate. Also exhibits O-acetylhomoserine thiolyase activity, catalyzing the synthesis of L-homocysteine from O-acetyl-L-homoserine and sulfide. This Bacillus subtilis (strain 168) protein is Cystathionine gamma-synthase/O-acetylhomoserine (thiol)-lyase (metI).